Consider the following 649-residue polypeptide: 1-deoxy-D-xylulose-5-phosphate synthase (649 aa).

Thiamine diphosphate contacts are provided by residues H74 and 115 to 117 (GHA). D146 is a Mg(2+) binding site. Thiamine diphosphate contacts are provided by residues 147-148 (GA), N176, Y292, and E375. N176 is a binding site for Mg(2+).

It belongs to the transketolase family. DXPS subfamily. As to quaternary structure, homodimer. Mg(2+) serves as cofactor. It depends on thiamine diphosphate as a cofactor.

It catalyses the reaction D-glyceraldehyde 3-phosphate + pyruvate + H(+) = 1-deoxy-D-xylulose 5-phosphate + CO2. It participates in metabolic intermediate biosynthesis; 1-deoxy-D-xylulose 5-phosphate biosynthesis; 1-deoxy-D-xylulose 5-phosphate from D-glyceraldehyde 3-phosphate and pyruvate: step 1/1. Its function is as follows. Catalyzes the acyloin condensation reaction between C atoms 2 and 3 of pyruvate and glyceraldehyde 3-phosphate to yield 1-deoxy-D-xylulose-5-phosphate (DXP). This is 1-deoxy-D-xylulose-5-phosphate synthase from Synechococcus sp. (strain JA-3-3Ab) (Cyanobacteria bacterium Yellowstone A-Prime).